We begin with the raw amino-acid sequence, 212 residues long: Deoxyribose-phosphate aldolase (212 aa).

The active-site Proton donor/acceptor is Asp89. The active-site Schiff-base intermediate with acetaldehyde is the Lys151. Lys180 (proton donor/acceptor) is an active-site residue.

This sequence belongs to the DeoC/FbaB aldolase family. DeoC type 1 subfamily.

It localises to the cytoplasm. The enzyme catalyses 2-deoxy-D-ribose 5-phosphate = D-glyceraldehyde 3-phosphate + acetaldehyde. Its pathway is carbohydrate degradation; 2-deoxy-D-ribose 1-phosphate degradation; D-glyceraldehyde 3-phosphate and acetaldehyde from 2-deoxy-alpha-D-ribose 1-phosphate: step 2/2. Its function is as follows. Catalyzes a reversible aldol reaction between acetaldehyde and D-glyceraldehyde 3-phosphate to generate 2-deoxy-D-ribose 5-phosphate. This chain is Deoxyribose-phosphate aldolase, found in Clostridium botulinum (strain Langeland / NCTC 10281 / Type F).